Consider the following 82-residue polypeptide: Small ribosomal subunit protein bS18 (82 aa).

The protein belongs to the bacterial ribosomal protein bS18 family. As to quaternary structure, part of the 30S ribosomal subunit. Forms a tight heterodimer with protein bS6.

In terms of biological role, binds as a heterodimer with protein bS6 to the central domain of the 16S rRNA, where it helps stabilize the platform of the 30S subunit. The sequence is that of Small ribosomal subunit protein bS18 from Rhizobium rhizogenes (strain K84 / ATCC BAA-868) (Agrobacterium radiobacter).